A 1657-amino-acid chain; its full sequence is Alsin (1657 aa).

RCC1 repeat units follow at residues 60-109, 110-168, and 169-219; these read GEVY…VTDN, GVAY…LSIS, and REIW…LVQC. Residues 432–481 are disordered; that stretch reads TGAQAGSSAIGPEGLKDSREEQVKQESMQGKKSSSLVDIREEETEGGSRR. A compositionally biased stretch (basic and acidic residues) spans 445 to 455; it reads GLKDSREEQVK. Residues 456 to 467 are compositionally biased toward polar residues; it reads QESMQGKKSSSL. 4 positions are modified to phosphoserine: Ser465, Ser466, Ser483, and Ser492. Thr510 carries the phosphothreonine modification. RCC1 repeat units lie at residues 526 to 577 and 578 to 628; these read TEVW…LTAK and SQVY…LVDT. Position 533 is an N6-acetyllysine (Lys533). Positions 690 to 885 constitute a DH domain; it reads GYIASLHELA…ECLALHLGRK (196 aa). One can recognise a PH domain in the interval 901–1007; it reads GKMTDSLRKP…RAISQAVDQA (107 aa). MORN repeat units follow at residues 1049-1071, 1072-1094, 1100-1122, 1123-1145, 1151-1173, 1175-1197, 1198-1220, and 1221-1244; these read YDGR…DGKM, YSGM…NKAM, YVGH…SGEV, FEGC…KLTS, FIGQ…TRGE, YMGM…FGLY, YEGN…DDTI, and YEGE…NGDY. Ser1335 carries the post-translational modification Phosphoserine. Residues 1513–1657 enclose the VPS9 domain; the sequence is KQPDIALLGF…YYQIQREKLN (145 aa).

In terms of assembly, forms a heteromeric complex with ALS2CL. Interacts with ALS2CL.

May act as a GTPase regulator. Controls survival and growth of spinal motoneurons. This chain is Alsin (ALS2), found in Pan troglodytes (Chimpanzee).